The primary structure comprises 272 residues: Nuclear transcription factor Y subunit A-1 (272 aa).

Disordered stretches follow at residues 1-20 and 34-106; these read MQSK…HAVQ and SFGV…PALS. Composition is skewed to polar residues over residues 46-61 and 82-92; these read IPSN…GSES and KDSQAATSSRS. The Subunit association domain (SAD) signature appears at 175 to 198; it reads YVNAKQYEGILRRRKARAKAELER. The segment at residues 205-230 is a DNA-binding region (NFYA/HAP2-type); the sequence is KPYLHESRHKHAMRRARASGGRFAKK. A disordered region spans residues 206–272; sequence PYLHESRHKH…NETLNSSGAP (67 aa). Residues 211 to 221 show a composition bias toward basic residues; sequence SRHKHAMRRAR. Positions 229–247 are enriched in basic and acidic residues; that stretch reads KKSEVEAGEDAGGRDRERG. Composition is skewed to polar residues over residues 248–257 and 263–272; these read SATNSSGSEQ and NETLNSSGAP.

This sequence belongs to the NFYA/HAP2 subunit family. As to quaternary structure, heterotrimeric transcription factor composed of three components, NF-YA, NF-YB and NF-YC. NF-YB and NF-YC must interact and dimerize for NF-YA association and DNA binding. Ubiquitous.

It is found in the nucleus. In terms of biological role, stimulates the transcription of various genes by recognizing and binding to a CCAAT motif in promoters. This Arabidopsis thaliana (Mouse-ear cress) protein is Nuclear transcription factor Y subunit A-1 (NFYA1).